The primary structure comprises 213 residues: uncharacterized protein (213 aa).

2 coiled-coil regions span residues 54–78 and 108–151; these read KEQT…NLKL and VKDV…STSK. Basic and acidic residues predominate over residues 122-142; sequence IEKEKEEEKAAKKAEKAEEKK. Residues 122 to 213 are disordered; sequence IEKEKEEEKA…FGGKPTGQIW (92 aa). Low complexity predominate over residues 146 to 188; sequence KNSTSKSGSKSSKSSSGSSKSSSKSSKSSKSSSGSSKSSSKSS. The segment covering 189–199 has biased composition (basic residues); it reads KNSKKSSKKSN.

The protein belongs to the mimivirus R546 family.

This is an uncharacterized protein from Acanthamoeba polyphaga (Amoeba).